The chain runs to 220 residues: uncharacterized protein (220 aa).

7 helical membrane-spanning segments follow: residues 6-26, 33-53, 59-79, 103-123, 126-146, 157-177, and 179-199; these read FSILVDFAAGGLVLASVLIVW, IVRLLAWQGAALAAIPLLRGI, ALIAVGIAVLALRALVLPWLL, LLITAGLTLTAFAITQPVVNL, GVTINAVPAAFAVVLIALFVM, AGFLMLDNGIAATAFLLTAGV, and LIVELGASLDVLFAVIVIGVL.

The protein resides in the cell membrane. This is an uncharacterized protein from Mycobacterium tuberculosis (strain ATCC 25618 / H37Rv).